The following is a 290-amino-acid chain: Endoplasmic reticulum-Golgi intermediate compartment protein 1 (290 aa).

The Cytoplasmic portion of the chain corresponds to 1–26 (MPFDFRRFDIYRKVPKDLTQPTYTGA). The helical transmembrane segment at 27–47 (IISICCCLFILFLFLSELTGF) threads the bilayer. Residues 48–254 (ITTEVVNELY…RRQPLYRFIT (207 aa)) lie on the Lumenal side of the membrane. N-linked (GlcNAc...) asparagine glycosylation occurs at asparagine 74. The helical transmembrane segment at 255–275 (TICAIIGGTFTVAGILDSCIF) threads the bilayer. Over 276 to 290 (TASEAWKKIQLGKMH) the chain is Cytoplasmic.

This sequence belongs to the ERGIC family. As to quaternary structure, may form a heteromeric complex composed of ERGIC1, ERGIC2 and ERGIC3. Within the complex, the interaction with ERGIC3 is direct. Interacts with ERGIC3/ERV46. N-glycosylated.

It is found in the endoplasmic reticulum membrane. The protein resides in the endoplasmic reticulum-Golgi intermediate compartment membrane. It localises to the golgi apparatus membrane. Its function is as follows. Possible role in transport between endoplasmic reticulum and Golgi. This is Endoplasmic reticulum-Golgi intermediate compartment protein 1 (ERGIC1) from Homo sapiens (Human).